The sequence spans 227 residues: uncharacterized protein (227 aa).

One can recognise a Response regulatory domain in the interval 2 to 115 (KILMIEDNVS…TLVARIKAVI (114 aa)). The residue at position 51 (Asp-51) is a 4-aspartylphosphate. Positions 128 to 226 (EDMIETECFT…VWGVGYKFDE (99 aa)) form a DNA-binding region, ompR/PhoB-type.

In terms of processing, phosphorylated by YclK.

Its subcellular location is the cytoplasm. Its function is as follows. Could be member of the two-component regulatory system YclK/YclJ. This is an uncharacterized protein from Bacillus subtilis (strain 168).